Consider the following 348-residue polypeptide: Phospho-2-dehydro-3-deoxyheptonate aldolase, Trp-sensitive (348 aa).

Belongs to the class-I DAHP synthase family.

The catalysed reaction is D-erythrose 4-phosphate + phosphoenolpyruvate + H2O = 7-phospho-2-dehydro-3-deoxy-D-arabino-heptonate + phosphate. It participates in metabolic intermediate biosynthesis; chorismate biosynthesis; chorismate from D-erythrose 4-phosphate and phosphoenolpyruvate: step 1/7. Functionally, stereospecific condensation of phosphoenolpyruvate (PEP) and D-erythrose-4-phosphate (E4P) giving rise to 3-deoxy-D-arabino-heptulosonate-7-phosphate (DAHP). The sequence is that of Phospho-2-dehydro-3-deoxyheptonate aldolase, Trp-sensitive (aroH) from Enterobacter agglomerans (Erwinia herbicola).